Here is a 147-residue protein sequence, read N- to C-terminus: SPI-1 type 3 secretion system pilotin (147 aa).

A signal peptide spans 1–15 (MKKFYSCLPVFLLIG). The N-palmitoyl cysteine moiety is linked to residue Cys-16. Cys-16 is lipidated: S-diacylglycerol cysteine.

This sequence belongs to the InvH family.

It is found in the cell outer membrane. Functionally, involved in the synthesis of the type III secretion system (T3SS), also called injectisome, which is used to inject bacterial effector proteins into eukaryotic host cells. Pilot protein that is required for the proper localization of the secretin InvG/SctC in the outer membrane. Necessary for efficient adherence and entry of these organisms into cultured epithelial cells. This is SPI-1 type 3 secretion system pilotin from Salmonella choleraesuis (strain SC-B67).